A 359-amino-acid polypeptide reads, in one-letter code: Endosome-associated-trafficking regulator 1 (359 aa).

Phosphoserine is present on residues serine 18 and serine 74. The tract at residues 100 to 125 is required for interaction with PTPN13; it reads LLDEDEDEEDGWNGAYLPSAMEQTHS. Residues 153 to 180 form a disordered region; it reads SLPPWTLSDSDSRISPTGSPSADFTAHG. A compositionally biased stretch (polar residues) spans 159–174; that stretch reads LSDSDSRISPTGSPSA. Phosphoserine is present on residues serine 167 and serine 171. The stretch at 185–295 forms a coiled coil; that stretch reads DRHLRTLQIS…FKRENEALRS (111 aa).

The protein belongs to the ENTR1 family. As to quaternary structure, found in a complex with ENTR1, PTPN13 and GIT1. Interacts with PTPN13 (via the FERM domain). Interacts (via N-terminus) with GIT1 (via N- and C-terminus); this interaction is direct. Interacts with NOD2. Interacts (via N-terminus) with IFT88. Interacts with VPS35. In terms of processing, phosphorylated.

It localises to the cytoplasm. The protein resides in the early endosome. Its subcellular location is the endosome. It is found in the recycling endosome. The protein localises to the midbody. It localises to the cytoskeleton. The protein resides in the microtubule organizing center. Its subcellular location is the centrosome. It is found in the cilium basal body. Functionally, endosome-associated protein that plays a role in membrane receptor sorting, cytokinesis and ciliogenesis. Involved in the endosome-to-plasma membrane trafficking and recycling of SNX27-retromer-dependent cargo proteins, such as GLUT1. Involved in the regulation of cytokinesis; the function may involve PTPN13 and GIT1. Plays a role in the formation of cilia. Involved in cargo protein localization, such as PKD2, at primary cilia. Involved in the presentation of the tumor necrosis factor (TNF) receptor TNFRSF1A on the cell surface, and hence in the modulation of the TNF-induced apoptosis. The polypeptide is Endosome-associated-trafficking regulator 1 (Bos taurus (Bovine)).